Consider the following 304-residue polypeptide: Cell division protein ZipA (304 aa).

The Periplasmic portion of the chain corresponds to M1–R5. The chain crosses the membrane as a helical span at residues L6–T26. The Cytoplasmic portion of the chain corresponds to S27–H304. The interval R31–K165 is disordered. Basic and acidic residues predominate over residues A121–E132. Positions A137 to P158 are enriched in low complexity.

It belongs to the ZipA family. Interacts with FtsZ via their C-terminal domains.

It localises to the cell inner membrane. Functionally, essential cell division protein that stabilizes the FtsZ protofilaments by cross-linking them and that serves as a cytoplasmic membrane anchor for the Z ring. Also required for the recruitment to the septal ring of downstream cell division proteins. The polypeptide is Cell division protein ZipA (Erwinia tasmaniensis (strain DSM 17950 / CFBP 7177 / CIP 109463 / NCPPB 4357 / Et1/99)).